The primary structure comprises 174 residues: Fimbria A protein (174 aa).

A signal peptide spans Met-1–Ala-22. Residues Cys-41 and Cys-80 are joined by a disulfide bond.

This sequence belongs to the fimbrial protein family.

The protein resides in the fimbrium. Its function is as follows. Major structural component of mannose-resistant fimbriae of Serratia marcescens. The sequence is that of Fimbria A protein (smfA) from Serratia marcescens.